Consider the following 100-residue polypeptide: Large ribosomal subunit protein uL23 (100 aa).

It belongs to the universal ribosomal protein uL23 family. As to quaternary structure, part of the 50S ribosomal subunit. Contacts protein L29, and trigger factor when it is bound to the ribosome.

One of the early assembly proteins it binds 23S rRNA. One of the proteins that surrounds the polypeptide exit tunnel on the outside of the ribosome. Forms the main docking site for trigger factor binding to the ribosome. The sequence is that of Large ribosomal subunit protein uL23 from Salmonella paratyphi A (strain ATCC 9150 / SARB42).